A 253-amino-acid chain; its full sequence is 5'/3'-nucleotidase SurE (253 aa).

Residues aspartate 8, aspartate 9, serine 39, and asparagine 92 each coordinate a divalent metal cation.

It belongs to the SurE nucleotidase family. It depends on a divalent metal cation as a cofactor.

The protein localises to the cytoplasm. It catalyses the reaction a ribonucleoside 5'-phosphate + H2O = a ribonucleoside + phosphate. It carries out the reaction a ribonucleoside 3'-phosphate + H2O = a ribonucleoside + phosphate. The enzyme catalyses [phosphate](n) + H2O = [phosphate](n-1) + phosphate + H(+). Nucleotidase with a broad substrate specificity as it can dephosphorylate various ribo- and deoxyribonucleoside 5'-monophosphates and ribonucleoside 3'-monophosphates with highest affinity to 3'-AMP. Also hydrolyzes polyphosphate (exopolyphosphatase activity) with the preference for short-chain-length substrates (P20-25). Might be involved in the regulation of dNTP and NTP pools, and in the turnover of 3'-mononucleotides produced by numerous intracellular RNases (T1, T2, and F) during the degradation of various RNAs. In Sodalis glossinidius (strain morsitans), this protein is 5'/3'-nucleotidase SurE.